A 232-amino-acid polypeptide reads, in one-letter code: 7-cyano-7-deazaguanine synthase (232 aa).

8-18 (FSGGQDSTTCL) is an ATP binding site. Positions 189, 198, 201, and 204 each coordinate Zn(2+).

Belongs to the QueC family. It depends on Zn(2+) as a cofactor.

It catalyses the reaction 7-carboxy-7-deazaguanine + NH4(+) + ATP = 7-cyano-7-deazaguanine + ADP + phosphate + H2O + H(+). The protein operates within purine metabolism; 7-cyano-7-deazaguanine biosynthesis. In terms of biological role, catalyzes the ATP-dependent conversion of 7-carboxy-7-deazaguanine (CDG) to 7-cyano-7-deazaguanine (preQ(0)). The polypeptide is 7-cyano-7-deazaguanine synthase (Serratia proteamaculans (strain 568)).